The chain runs to 380 residues: Probable pectin lyase A (380 aa).

The signal sequence occupies residues 1–20 (MRYTSLFTAVTAALASTAAA). 2 disulfides stabilise this stretch: Cys-83-Cys-102 and Cys-92-Cys-226. Asn-129 carries an N-linked (GlcNAc...) asparagine glycan. Residue Arg-256 is part of the active site. An intrachain disulfide couples Cys-323 to Cys-331.

It belongs to the polysaccharide lyase 1 family.

Its subcellular location is the secreted. The enzyme catalyses Eliminative cleavage of (1-&gt;4)-alpha-D-galacturonan methyl ester to give oligosaccharides with 4-deoxy-6-O-methyl-alpha-D-galact-4-enuronosyl groups at their non-reducing ends.. In terms of biological role, pectinolytic enzymes consist of four classes of enzymes: pectin lyase, polygalacturonase, pectin methylesterase and rhamnogalacturonase. Among pectinolytic enzymes, pectin lyase is the most important in depolymerization of pectin, since it cleaves internal glycosidic bonds of highly methylated pectins. The protein is Probable pectin lyase A (pelA) of Aspergillus fumigatus (strain ATCC MYA-4609 / CBS 101355 / FGSC A1100 / Af293) (Neosartorya fumigata).